Reading from the N-terminus, the 1066-residue chain is Bifunctional cytochrome P450/NADPH--P450 reductase (1066 aa).

Residues 1–480 (MAESVPIPEP…LAGNGATSSS (480 aa)) are cytochrome P450. A heme-binding site is contributed by Cys407. The tract at residues 481 to 1066 (THNIKAAANL…NERFATDVFD (586 aa)) is NADPH-P-450 reductase. The region spanning 500–641 (MAIFYGSNSG…DFEAWEDIVL (142 aa)) is the Flavodoxin-like domain. FMN contacts are provided by residues 506–511 (SNSGTC), 554–557 (SYEG), Cys588, and Thr596. The FAD-binding FR-type domain occupies 676-904 (QDVEEALVVA…RASSEAFHLP (229 aa)).

It in the N-terminal section; belongs to the cytochrome P450 family. FAD is required as a cofactor. Requires FMN as cofactor. The cofactor is heme.

It localises to the membrane. The enzyme catalyses an organic molecule + reduced [NADPH--hemoprotein reductase] + O2 = an alcohol + oxidized [NADPH--hemoprotein reductase] + H2O + H(+). It carries out the reaction 2 oxidized [cytochrome P450] + NADPH = 2 reduced [cytochrome P450] + NADP(+) + H(+). With respect to regulation, stimulated NADPH--cytochrome reductase activity in the presence of substrate. Inhibited by fatty acid substrates longer than 13 carbons and the degree of inhibition increases with increasing chain length. In terms of biological role, functions as a fatty acid monooxygenase. Catalyzes hydroxylation of fatty acids at omega-1, omega-2 and omega-3 positions. Shows activity toward fatty acids with a chain length of 9-18 carbons with optimum chain lengths of 12-14 carbons (lauric, tridecylic and myristic acids). Can also use shorter saturated fatty acids with a chain length of 9 or 10 carbons as substrates. Also displays a NADPH-dependent reductase activity in the C-terminal domain, which allows electron transfer from NADPH to the heme iron of the cytochrome P450 N-terminal domain. The protein is Bifunctional cytochrome P450/NADPH--P450 reductase of Fusarium oxysporum (Fusarium vascular wilt).